The chain runs to 193 residues: Dual-action ribosomal maturation protein DarP (193 aa).

Residues 1–10 (MRGRDEDTGE) are compositionally biased toward basic and acidic residues. 2 disordered regions span residues 1 to 20 (MRGRDEDTGEFRGASRSQQR) and 171 to 193 (QEQGLESGDSGLEDGESALEDDE). A compositionally biased stretch (acidic residues) spans 181–193 (GLEDGESALEDDE).

It belongs to the DarP family.

Its subcellular location is the cytoplasm. Its function is as follows. Member of a network of 50S ribosomal subunit biogenesis factors which assembles along the 30S-50S interface, preventing incorrect 23S rRNA structures from forming. Promotes peptidyl transferase center (PTC) maturation. This chain is Dual-action ribosomal maturation protein DarP, found in Xanthomonas oryzae pv. oryzae (strain KACC10331 / KXO85).